A 1077-amino-acid polypeptide reads, in one-letter code: Carbamoyl phosphate synthase large chain (1077 aa).

The carboxyphosphate synthetic domain stretch occupies residues 1 to 403 (MPKRTDIQSI…SLHKALRGLE (403 aa)). ATP-binding residues include Arg129, Arg169, Gly175, Gly176, Glu208, Leu210, Glu215, Gly241, Ile242, His243, Gln285, and Glu299. The 196-residue stretch at 133 to 328 (DKAMKSIGLE…IAKIAAKLAV (196 aa)) folds into the ATP-grasp 1 domain. Mg(2+)-binding residues include Gln285, Glu299, and Asn301. Residues Gln285, Glu299, and Asn301 each contribute to the Mn(2+) site. Positions 404 to 553 (VGATGFDEMV…YSSYDEECEA (150 aa)) are oligomerization domain. Residues 554–935 (NPTDKDKIMV…AYAKAELGCG (382 aa)) form a carbamoyl phosphate synthetic domain region. One can recognise an ATP-grasp 2 domain in the interval 678-869 (QAAVERLGLL…LAKIAARVMA (192 aa)). 10 residues coordinate ATP: Arg714, Arg753, Leu755, Glu760, Gly785, Val786, His787, Ser788, Gln828, and Glu840. Mg(2+)-binding residues include Gln828, Glu840, and Asn842. 3 residues coordinate Mn(2+): Gln828, Glu840, and Asn842. The 142-residue stretch at 936–1077 (SVYPEGGRAL…HAKVKASLEA (142 aa)) folds into the MGS-like domain. The interval 936–1077 (SVYPEGGRAL…HAKVKASLEA (142 aa)) is allosteric domain.

The protein belongs to the CarB family. In terms of assembly, composed of two chains; the small (or glutamine) chain promotes the hydrolysis of glutamine to ammonia, which is used by the large (or ammonia) chain to synthesize carbamoyl phosphate. Tetramer of heterodimers (alpha,beta)4. Requires Mg(2+) as cofactor. Mn(2+) is required as a cofactor.

The enzyme catalyses hydrogencarbonate + L-glutamine + 2 ATP + H2O = carbamoyl phosphate + L-glutamate + 2 ADP + phosphate + 2 H(+). It carries out the reaction hydrogencarbonate + NH4(+) + 2 ATP = carbamoyl phosphate + 2 ADP + phosphate + 2 H(+). The protein operates within amino-acid biosynthesis; L-arginine biosynthesis; carbamoyl phosphate from bicarbonate: step 1/1. It functions in the pathway pyrimidine metabolism; UMP biosynthesis via de novo pathway; (S)-dihydroorotate from bicarbonate: step 1/3. Large subunit of the glutamine-dependent carbamoyl phosphate synthetase (CPSase). CPSase catalyzes the formation of carbamoyl phosphate from the ammonia moiety of glutamine, carbonate, and phosphate donated by ATP, constituting the first step of 2 biosynthetic pathways, one leading to arginine and/or urea and the other to pyrimidine nucleotides. The large subunit (synthetase) binds the substrates ammonia (free or transferred from glutamine from the small subunit), hydrogencarbonate and ATP and carries out an ATP-coupled ligase reaction, activating hydrogencarbonate by forming carboxy phosphate which reacts with ammonia to form carbamoyl phosphate. This is Carbamoyl phosphate synthase large chain from Vibrio parahaemolyticus serotype O3:K6 (strain RIMD 2210633).